The chain runs to 394 residues: S-adenosylmethionine synthase 1 (394 aa).

Residue Glu11 coordinates Mg(2+). His17 contributes to the ATP binding site. Glu45 provides a ligand contact to K(+). L-methionine contacts are provided by Glu58 and Gln101. ATP contacts are provided by residues 169 to 171, 237 to 240, Asp248, 254 to 255, Ala271, Lys275, and Lys279; these read DGK, SGRF, and RK. Position 248 (Asp248) interacts with L-methionine. Lys279 is a binding site for L-methionine.

Belongs to the AdoMet synthase family. As to quaternary structure, homotetramer. It depends on Mn(2+) as a cofactor. Requires Mg(2+) as cofactor. Co(2+) serves as cofactor. The cofactor is K(+).

It localises to the cytoplasm. It catalyses the reaction L-methionine + ATP + H2O = S-adenosyl-L-methionine + phosphate + diphosphate. It functions in the pathway amino-acid biosynthesis; S-adenosyl-L-methionine biosynthesis; S-adenosyl-L-methionine from L-methionine: step 1/1. In terms of biological role, catalyzes the formation of S-adenosylmethionine from methionine and ATP. The reaction comprises two steps that are both catalyzed by the same enzyme: formation of S-adenosylmethionine (AdoMet) and triphosphate, and subsequent hydrolysis of the triphosphate. The sequence is that of S-adenosylmethionine synthase 1 (SAMS1) from Triticum monococcum (Einkorn wheat).